Here is a 609-residue protein sequence, read N- to C-terminus: Beta-(1--&gt;2)glucan export ATP-binding/permease protein NdvA (609 aa).

The ABC transmembrane type-1 domain maps to 21–311 (GWILAGANLL…VVSFINSVFM (291 aa)). A run of 6 helical transmembrane segments spans residues 22-42 (WILA…PVLF), 68-88 (LLAV…TVAL), 146-166 (EHFA…YINW), 167-187 (RLAI…TLVV), 248-268 (WWAV…LAIF), and 285-305 (IVMF…VVSF). The 235-residue stretch at 345 to 579 (VEFNDVSFSY…GGHFAQLAKA (235 aa)) folds into the ABC transporter domain. Position 378 to 385 (378 to 385 (GPTGAGKS)) interacts with ATP.

The protein belongs to the ABC transporter superfamily. Beta-(1--&gt;2)glucan exporter (TC 3.A.1.108.1) family. As to quaternary structure, homodimer.

The protein localises to the cell inner membrane. It carries out the reaction [(1-&gt;2)-beta-D-glucosyl](n)(in) + ATP + H2O = [(1-&gt;2)-beta-D-glucosyl](n)(out) + ADP + phosphate + H(+). Involved in beta-(1--&gt;2)glucan export. Transmembrane domains (TMD) form a pore in the inner membrane and the ATP-binding domain (NBD) is responsible for energy generation. This is Beta-(1--&gt;2)glucan export ATP-binding/permease protein NdvA from Nitrobacter winogradskyi (strain ATCC 25391 / DSM 10237 / CIP 104748 / NCIMB 11846 / Nb-255).